The chain runs to 140 residues: MNMKLTIVTPEKRILVGQEVDEVTVPAFKGELNILPGHAPLITTLETGVMKWKLKGKEKQDLAVISWGYCQVSPEGVNILANIADLPEEIDLQATKEFLALSEKKIMNELITDEDWAEFQRDWAHARAKIEAAEQQPAKK.

Belongs to the ATPase epsilon chain family. F-type ATPases have 2 components, CF(1) - the catalytic core - and CF(0) - the membrane proton channel. CF(1) has five subunits: alpha(3), beta(3), gamma(1), delta(1), epsilon(1). CF(0) has three main subunits: a, b and c.

It localises to the cell inner membrane. Its function is as follows. Produces ATP from ADP in the presence of a proton gradient across the membrane. The protein is ATP synthase epsilon chain of Bdellovibrio bacteriovorus (strain ATCC 15356 / DSM 50701 / NCIMB 9529 / HD100).